Reading from the N-terminus, the 145-residue chain is Mannitol-specific phosphotransferase enzyme IIA component (145 aa).

Residues 4–143 (TILSTETIKV…QEVLAFLGEV (140 aa)) enclose the PTS EIIA type-2 domain. Residue His64 is the Tele-phosphohistidine intermediate of the active site. At His64 the chain carries Phosphohistidine; by HPr.

The protein localises to the cytoplasm. The phosphoenolpyruvate-dependent sugar phosphotransferase system (sugar PTS), a major carbohydrate active transport system, catalyzes the phosphorylation of incoming sugar substrates concomitantly with their translocation across the cell membrane. The enzyme II CmtAB PTS system is involved in D-mannitol transport. The protein is Mannitol-specific phosphotransferase enzyme IIA component (mtlF) of Halalkalibacterium halodurans (strain ATCC BAA-125 / DSM 18197 / FERM 7344 / JCM 9153 / C-125) (Bacillus halodurans).